Reading from the N-terminus, the 129-residue chain is NADH-quinone oxidoreductase subunit A (129 aa).

Transmembrane regions (helical) follow at residues 6 to 26 (FWPFILYAGMVLVLVALIVGF), 63 to 83 (LVAVLFVIFDMEAAFIFAWAV), and 89 to 109 (GWIGYGGALAFITILGVALIY).

This sequence belongs to the complex I subunit 3 family. In terms of assembly, NDH-1 is composed of 14 different subunits. Subunits NuoA, H, J, K, L, M, N constitute the membrane sector of the complex.

The protein resides in the cell inner membrane. The catalysed reaction is a quinone + NADH + 5 H(+)(in) = a quinol + NAD(+) + 4 H(+)(out). In terms of biological role, NDH-1 shuttles electrons from NADH, via FMN and iron-sulfur (Fe-S) centers, to quinones in the respiratory chain. The immediate electron acceptor for the enzyme in this species is believed to be ubiquinone. Couples the redox reaction to proton translocation (for every two electrons transferred, four hydrogen ions are translocated across the cytoplasmic membrane), and thus conserves the redox energy in a proton gradient. This is NADH-quinone oxidoreductase subunit A from Nitrosococcus oceani (strain ATCC 19707 / BCRC 17464 / JCM 30415 / NCIMB 11848 / C-107).